The primary structure comprises 436 residues: Trigger factor (436 aa).

Residues G163–P248 form the PPIase FKBP-type domain.

Belongs to the FKBP-type PPIase family. Tig subfamily.

It is found in the cytoplasm. It catalyses the reaction [protein]-peptidylproline (omega=180) = [protein]-peptidylproline (omega=0). Functionally, involved in protein export. Acts as a chaperone by maintaining the newly synthesized protein in an open conformation. Functions as a peptidyl-prolyl cis-trans isomerase. This Hydrogenovibrio crunogenus (strain DSM 25203 / XCL-2) (Thiomicrospira crunogena) protein is Trigger factor.